Consider the following 132-residue polypeptide: uncharacterized protein (132 aa).

A helical transmembrane segment spans residues 66–86 (LPPMLLVLAALFVKGLIPLVL).

It localises to the membrane. This is an uncharacterized protein from Saccharomyces cerevisiae (strain ATCC 204508 / S288c) (Baker's yeast).